We begin with the raw amino-acid sequence, 728 residues long: Nucleolar GTP-binding protein 2 (728 aa).

At Met1 the chain carries N-acetylmethionine. The segment at Met1–Arg33 is disordered. The span at Ser10–Asp22 shows a compositional bias: polar residues. The CP-type G domain occupies Trp207–Pro368. GTP is bound by residues Gly317–Ser324 and Asp361–Val365. 3 disordered regions span residues Pro462–Glu521, Val538–Ala595, and Tyr636–Gln728. Low complexity predominate over residues Glu480 to Asn489. A compositionally biased stretch (basic and acidic residues) spans Glu498–Ser520. Ser504 carries the post-translational modification Phosphoserine. Acidic residues predominate over residues Ser553–Glu586. Residues Lys718 to Gln728 are compositionally biased toward basic residues.

This sequence belongs to the TRAFAC class YlqF/YawG GTPase family. NOG2 subfamily. As to quaternary structure, interacts with LYAR and RPL23A. Interacts with the nuclear importin-beta receptor and, at a lower extent, with importin-alpha.

The protein resides in the nucleus. It is found in the nucleolus. In terms of biological role, GTPase that associates with pre-60S ribosomal subunits in the nucleolus and is required for their nuclear export and maturation. May promote cell proliferation possibly by increasing p53/TP53 protein levels, and consequently those of its downstream product CDKN1A/p21, and decreasing RPL23A protein levels. This is Nucleolar GTP-binding protein 2 (Gnl2) from Mus musculus (Mouse).